The primary structure comprises 178 residues: CDP-diacylglycerol--glycerol-3-phosphate 3-phosphatidyltransferase (178 aa).

Helical transmembrane passes span 5-25 (PNYL…LFYI), 32-52 (KLGA…GYIA), 61-81 (FGKM…TIML), and 145-165 (IIYL…LTII).

The protein belongs to the CDP-alcohol phosphatidyltransferase class-I family.

The protein localises to the cell membrane. It catalyses the reaction a CDP-1,2-diacyl-sn-glycerol + sn-glycerol 3-phosphate = a 1,2-diacyl-sn-glycero-3-phospho-(1'-sn-glycero-3'-phosphate) + CMP + H(+). Its pathway is phospholipid metabolism; phosphatidylglycerol biosynthesis; phosphatidylglycerol from CDP-diacylglycerol: step 1/2. In terms of biological role, this protein catalyzes the committed step to the synthesis of the acidic phospholipids. This is CDP-diacylglycerol--glycerol-3-phosphate 3-phosphatidyltransferase (pgsA) from Rickettsia typhi (strain ATCC VR-144 / Wilmington).